We begin with the raw amino-acid sequence, 715 residues long: Polyribonucleotide nucleotidyltransferase (715 aa).

Residues aspartate 487 and aspartate 493 each contribute to the Mg(2+) site. In terms of domain architecture, KH spans 554–613 (PRLYTFKINPEKIRDVIGKGGAVIRALTEETGTTIDIQDDGTITIAATSGEAAAAARSRI). Residues 623–691 (GKIYEGTVLK…DRGRVKLSMK (69 aa)) form the S1 motif domain.

This sequence belongs to the polyribonucleotide nucleotidyltransferase family. Mg(2+) is required as a cofactor.

It is found in the cytoplasm. It carries out the reaction RNA(n+1) + phosphate = RNA(n) + a ribonucleoside 5'-diphosphate. Involved in mRNA degradation. Catalyzes the phosphorolysis of single-stranded polyribonucleotides processively in the 3'- to 5'-direction. In Dechloromonas aromatica (strain RCB), this protein is Polyribonucleotide nucleotidyltransferase.